Reading from the N-terminus, the 410-residue chain is Cysteine desulfurase IscS (410 aa).

Pyridoxal 5'-phosphate is bound by residues Ala-80–Thr-81, Asn-160, Gln-188, and Ser-208–His-210. Lys-211 carries the N6-(pyridoxal phosphate)lysine modification. Residue Thr-248 coordinates pyridoxal 5'-phosphate. Cys-334 functions as the Cysteine persulfide intermediate in the catalytic mechanism. Residue Cys-334 participates in [2Fe-2S] cluster binding.

The protein belongs to the class-V pyridoxal-phosphate-dependent aminotransferase family. NifS/IscS subfamily. As to quaternary structure, homodimer. Forms a heterotetramer with IscU, interacts with other sulfur acceptors. Pyridoxal 5'-phosphate is required as a cofactor.

The protein localises to the cytoplasm. The enzyme catalyses (sulfur carrier)-H + L-cysteine = (sulfur carrier)-SH + L-alanine. The protein operates within cofactor biosynthesis; iron-sulfur cluster biosynthesis. Its function is as follows. Master enzyme that delivers sulfur to a number of partners involved in Fe-S cluster assembly, tRNA modification or cofactor biosynthesis. Catalyzes the removal of elemental sulfur atoms from cysteine to produce alanine. Functions as a sulfur delivery protein for Fe-S cluster synthesis onto IscU, an Fe-S scaffold assembly protein, as well as other S acceptor proteins. This chain is Cysteine desulfurase IscS, found in Rickettsia typhi (strain ATCC VR-144 / Wilmington).